The following is a 566-amino-acid chain: Beta,beta-carotene 15,15'-dioxygenase (566 aa).

His-172, His-237, His-308, and His-514 together coordinate Fe cation. The segment at 530–566 is disordered; that stretch reads PAETQEVENSDHPTDPTAPELSHSENDFTAGHGGSSL.

It belongs to the carotenoid oxygenase family. Fe(2+) is required as a cofactor. As to expression, expressed in liver, kidney, small intestine and testis.

The protein localises to the cytoplasm. It is found in the cytosol. The enzyme catalyses all-trans-beta-carotene + O2 = 2 all-trans-retinal. Its pathway is cofactor metabolism; retinol metabolism. In terms of biological role, symmetrically cleaves beta-carotene into two molecules of retinal using a dioxygenase mechanism. This chain is Beta,beta-carotene 15,15'-dioxygenase, found in Mus musculus (Mouse).